The sequence spans 723 residues: Cyclin-T2 (723 aa).

The interaction with MDFIC and MDFI stretch occupies residues 1–298 (MASGRGASSR…SVTGVPANPS (298 aa)). Residues 12-147 (FFTREQLENT…IMLQTLGFEI (136 aa)) enclose the Cyclin N-terminal domain. The interval 250-298 (RLKRIRNWRAMAKKPKVDGQVSETPLLGSSLVQNSILVDSVTGVPANPS) is interaction with POLR2A. Composition is skewed to polar residues over residues 297 to 307 (PSFQKPSTSTF) and 314 to 325 (NSGSTSVQDSRA). Disordered regions lie at residues 297–325 (PSFQKPSTSTFPAPIPLNSGSTSVQDSRA), 340–364 (SYSLSSHQEWPQHPDSARTDPVYTQ), 385–428 (ALHS…GMLP), and 458–645 (AEQQ…SSVK). Over residues 395-409 (DKVADHSSAKQEYTH) the composition is skewed to basic and acidic residues. Residue Lys-404 forms a Glycyl lysine isopeptide (Lys-Gly) (interchain with G-Cter in SUMO2) linkage. Ser-477 bears the Phosphoserine mark. 3 stretches are compositionally biased toward basic and acidic residues: residues 489-503 (DRPEKHVAEKKERSG), 517-543 (GPSKEELKMKIKVASSERHSSSDEGSG), and 552-565 (ISRDHKEKHKEHPA). Residues 566 to 576 (NRHHSSHKYLH) are compositionally biased toward basic residues. Ser-596 is subject to Phosphoserine. Positions 631 to 645 (SSKSAGSSSSSSSVK) are enriched in low complexity.

The protein belongs to the cyclin family. Cyclin C subfamily. Interacts with CDK9 to form P-TEFb. Interacts with POLR2A (via the C-terminal domain (CTD)); mediates transcriptional activity. Interacts with HEXIM1; mediates formation of a tripartite complex with KPNA2. Interacts with HEXIM2. Interacts with PKN1; enhances MYOD1-dependent transcription. P-TEFB complex interacts with RB1; promotes phosphorylation of RB1. P-TEFB complex interacts with MYOD1; promotes the transcriptional activity of MYOD1 through its CDK9-mediated phosphorylation. Interacts with MDFI and MDFIC. As to expression, highly expressed in all phases of skeletal muscle differentiation, particularly in later stages. Highly expressed in skeletal muscle. Significantly expressed in heart, brain, kidney, liver, testis, and pancreas.

The protein localises to the cytoplasm. It localises to the perinuclear region. It is found in the nucleus. Its function is as follows. Regulatory subunit of the cyclin-dependent kinase pair (CDK9/cyclin T) complex, also called positive transcription elongation factor B (P-TEFB), which is proposed to facilitate the transition from abortive to production elongation by phosphorylating the CTD (carboxy-terminal domain) of the large subunit of RNA polymerase II (RNAP II). The activity of this complex is regulated by binding with 7SK snRNA. Plays a role during muscle differentiation; P-TEFB complex interacts with MYOD1; this tripartite complex promotes the transcriptional activity of MYOD1 through its CDK9-mediated phosphorylation and binds the chromatin of promoters and enhancers of muscle-specific genes; this event correlates with hyperphosphorylation of the CTD domain of RNA pol II. In addition, enhances MYOD1-dependent transcription through interaction with PKN1. Involved in early embryo development. The protein is Cyclin-T2 of Mus musculus (Mouse).